The chain runs to 894 residues: Valine--tRNA ligase (894 aa).

A 'HIGH' region motif is present at residues Pro48–His58. A 'KMSKS' region motif is present at residues Lys527–Ser531. ATP is bound at residue Lys530. Residues Leu827–Ser852 adopt a coiled-coil conformation.

The protein belongs to the class-I aminoacyl-tRNA synthetase family. ValS type 1 subfamily. In terms of assembly, monomer.

It localises to the cytoplasm. It carries out the reaction tRNA(Val) + L-valine + ATP = L-valyl-tRNA(Val) + AMP + diphosphate. Its function is as follows. Catalyzes the attachment of valine to tRNA(Val). As ValRS can inadvertently accommodate and process structurally similar amino acids such as threonine, to avoid such errors, it has a 'posttransfer' editing activity that hydrolyzes mischarged Thr-tRNA(Val) in a tRNA-dependent manner. The polypeptide is Valine--tRNA ligase (Bdellovibrio bacteriovorus (strain ATCC 15356 / DSM 50701 / NCIMB 9529 / HD100)).